A 246-amino-acid polypeptide reads, in one-letter code: RNA polymerase sigma-B factor (246 aa).

Residues Asp-25–Val-38 carry the Polymerase core binding motif. The H-T-H motif DNA-binding region spans Leu-201 to Ile-220.

This sequence belongs to the sigma-70 factor family.

Sigma factors are initiation factors that promote the attachment of RNA polymerase to specific initiation sites and are then released. This sigma factor is essential for late-stage differentiation of M.xanthus. The chain is RNA polymerase sigma-B factor (sigB) from Myxococcus xanthus.